The sequence spans 407 residues: uncharacterized protein (407 aa).

A run of 11 helical transmembrane segments spans residues 13–30 (IVFTSFILYLLFFLSPFL), 40–62 (VTPLASIIGSGYLVSAPLLYYVL), 67–89 (ILGMAGIVILAYLIGGAIRYNII), 118–140 (LAFAYMISIAFYLRLLSSFVFSG), 147–169 (VYERLLTTGLLLFIGISGFIRRL), 179–199 (AVGLKLSIIFSFLTALLYYNY), 253–271 (WISGFIYVSFMFLITSVFV), 281–303 (TEIIFLASAVSLVLGYLLRFGPL), 334–356 (GYLITTLVGVALVWSANVFEIIA), 361–378 (AFAFYYLLQTIIAWLVSF), and 385–402 (QFLVFTLLIPVLIFIVLF).

It localises to the cell membrane. This is an uncharacterized protein from Aquifex aeolicus (strain VF5).